The primary structure comprises 282 residues: Acyl-CoA-binding domain-containing protein 6 (282 aa).

The tract at residues 1-39 (MATPFLPSGATTGDSGGELSSGDDSGDMESFQTPEAEGT) is disordered. Ser41 bears the Phosphoserine mark. The ACB domain occupies 42-127 (LAELFEKAAA…VKKLDPGWNP (86 aa)). An acyl-CoA contacts are provided by residues 69–73 (YARFK) and Lys95. Ser106 carries the phosphoserine modification. Tyr114 is a binding site for an acyl-CoA. ANK repeat units lie at residues 191 to 220 (EGRA…GINC) and 224 to 253 (EGQT…DPTL).

In terms of assembly, monomer.

Its subcellular location is the cytoplasm. It localises to the nucleus. Binds long-chain acyl-coenzyme A molecules with a strong preference for unsaturated C18:1-CoA, lower affinity for unsaturated C20:4-CoA, and very weak affinity for saturated C16:0-CoA. Does not bind fatty acids. Plays a role in protein N-myristoylation. In Mus musculus (Mouse), this protein is Acyl-CoA-binding domain-containing protein 6 (Acbd6).